Consider the following 3630-residue polypeptide: Trimeric autotransporter adhesin AtaA (3630 aa).

An N-terminal signal peptide occupies residues 1–23 (MNKIYKVIWNATLLAWVAVSELA). The surface exposed passenger domain stretch occupies residues 24 to 3487 (KGKTKSTTSK…TNQAVVNYLG (3464 aa)). The N-terminal YadA-like head stretch occupies residues 108–315 (SIAIGENAQG…ASDAVTVAQL (208 aa)). The interval 316-2904 (DKAYDDTNGR…GRAATEEQLK (2589 aa)) is N-terminal stalk. Positions 2905–3169 (AVITSNITEV…DSDAVNVAQL (265 aa)) are C-terminal YadA-like head. Residues 3170–3561 (KAVGNQVVTT…DVEKKANAGI (392 aa)) form a C-terminal stalk region. The interval 3539–3574 (LDNAFRITNNRIDDVEKKANAGIAAAMALESAPYVP) is outer membrane translocation of the passenger domain. 4 beta stranded membrane-spanning segments follow: residues 3575–3585 (GKYTYAAGAAY), 3589–3599 (ENAVGVTLRKT), 3608–3614 (TGGVAAA), and 3618–3629 (DASVRIGISGVI). Residues 3575-3630 (GKYTYAAGAAYHGGENAVGVTLRKTADNGRWSITGGVAAASQGDASVRIGISGVID) form a translocator domain region.

This sequence belongs to the autotransporter-2 (AT-2) (TC 1.B.40) family. Homotrimer. Interacts with TpgA.

It is found in the cell surface. It localises to the cell outer membrane. In terms of biological role, responsible for autoagglutination, and for adhesion to abiotic and biotic surfaces such as polystyrene (PS), type I collagen, polypropylene (PP), polyvinylchloride (PVC), glass and stainless steel (SS). Adhesion is much stronger than that mediated by Yersinia YadA in a comparative assay. Confers autoagglutination and binding to PS, type I collagen, PP, PVC, glass and SS upon expression in Acinetobacter baylyi strain ADP1. Involved in rapid, irreversible adherence to polyurethane. Forms an unusual biofilm. An extended, surface exposed fiber binds to quartz crystals, PS and glass. It can be removed by washing in distilled water. The sequence is that of Trimeric autotransporter adhesin AtaA from Acinetobacter sp. (strain Tol 5).